The following is a 416-amino-acid chain: Gamma-glutamyl phosphate reductase (416 aa).

It belongs to the gamma-glutamyl phosphate reductase family.

Its subcellular location is the cytoplasm. The catalysed reaction is L-glutamate 5-semialdehyde + phosphate + NADP(+) = L-glutamyl 5-phosphate + NADPH + H(+). It functions in the pathway amino-acid biosynthesis; L-proline biosynthesis; L-glutamate 5-semialdehyde from L-glutamate: step 2/2. Functionally, catalyzes the NADPH-dependent reduction of L-glutamate 5-phosphate into L-glutamate 5-semialdehyde and phosphate. The product spontaneously undergoes cyclization to form 1-pyrroline-5-carboxylate. The sequence is that of Gamma-glutamyl phosphate reductase from Streptococcus pyogenes serotype M6 (strain ATCC BAA-946 / MGAS10394).